The chain runs to 241 residues: ATP synthase subunit a (241 aa).

5 helical membrane-spanning segments follow: residues 30 to 50, 91 to 111, 128 to 148, 193 to 213, and 214 to 234; these read GQVF…ISLG, FIGT…LIPW, INTT…AGLS, LVVG…VMFL, and GLFT…YYIG.

This sequence belongs to the ATPase A chain family. In terms of assembly, F-type ATPases have 2 components, CF(1) - the catalytic core - and CF(0) - the membrane proton channel. CF(1) has five subunits: alpha(3), beta(3), gamma(1), delta(1), epsilon(1). CF(0) has four main subunits: a, b, b' and c.

It localises to the cellular thylakoid membrane. In terms of biological role, key component of the proton channel; it plays a direct role in the translocation of protons across the membrane. This is ATP synthase subunit a from Prochlorococcus marinus (strain MIT 9312).